The following is a 323-amino-acid chain: Probable cell division protein WhiA (323 aa).

The H-T-H motif DNA-binding region spans Thr-275–Ser-309.

The protein belongs to the WhiA family.

Functionally, involved in cell division and chromosome segregation. The protein is Probable cell division protein WhiA of Listeria welshimeri serovar 6b (strain ATCC 35897 / DSM 20650 / CCUG 15529 / CIP 8149 / NCTC 11857 / SLCC 5334 / V8).